Reading from the N-terminus, the 246-residue chain is 1-(5-phosphoribosyl)-5-[(5-phosphoribosylamino)methylideneamino] imidazole-4-carboxamide isomerase (246 aa).

D8 acts as the Proton acceptor in catalysis. The active-site Proton donor is the D131.

The protein belongs to the HisA/HisF family.

It localises to the cytoplasm. The enzyme catalyses 1-(5-phospho-beta-D-ribosyl)-5-[(5-phospho-beta-D-ribosylamino)methylideneamino]imidazole-4-carboxamide = 5-[(5-phospho-1-deoxy-D-ribulos-1-ylimino)methylamino]-1-(5-phospho-beta-D-ribosyl)imidazole-4-carboxamide. The protein operates within amino-acid biosynthesis; L-histidine biosynthesis; L-histidine from 5-phospho-alpha-D-ribose 1-diphosphate: step 4/9. The sequence is that of 1-(5-phosphoribosyl)-5-[(5-phosphoribosylamino)methylideneamino] imidazole-4-carboxamide isomerase from Delftia acidovorans (strain DSM 14801 / SPH-1).